The chain runs to 498 residues: Lysine--tRNA ligase (498 aa).

Residues Glu-401 and Glu-408 each coordinate Mg(2+).

It belongs to the class-II aminoacyl-tRNA synthetase family. Homodimer. It depends on Mg(2+) as a cofactor.

Its subcellular location is the cytoplasm. The enzyme catalyses tRNA(Lys) + L-lysine + ATP = L-lysyl-tRNA(Lys) + AMP + diphosphate. This chain is Lysine--tRNA ligase, found in Dehalococcoides mccartyi (strain ATCC BAA-2266 / KCTC 15142 / 195) (Dehalococcoides ethenogenes (strain 195)).